The chain runs to 192 residues: Per os infectivity factor 6 (192 aa).

The helical transmembrane segment at 154 to 174 threads the bilayer; that stretch reads IAYVFLFFICIVLLSVLAVFF.

Its subcellular location is the host membrane. It localises to the virion. It is found in the host cytoplasm. The protein localises to the host nucleus. Functionally, per os infectivity factor. The chain is Per os infectivity factor 6 (AC68) from Autographa californica nuclear polyhedrosis virus (AcMNPV).